We begin with the raw amino-acid sequence, 617 residues long: Probable LRR receptor-like serine/threonine-protein kinase RKF3 (617 aa).

Residues Met1–Ala20 form the signal peptide. Residues Gln21–Lys212 are Extracellular-facing. 4 N-linked (GlcNAc...) asparagine glycosylation sites follow: Asn22, Asn124, Asn135, and Asn165. The chain crosses the membrane as a helical span at residues Val213–Phe233. The Cytoplasmic segment spans residues Trp234–Thr617. One can recognise a Protein kinase domain in the interval Phe283 to Thr563. Residues Ile289–Val297 and Lys311 each bind ATP. Asp412 serves as the catalytic Proton acceptor. A disordered region spans residues Val585 to Thr617.

It belongs to the protein kinase superfamily. Ser/Thr protein kinase family. As to expression, expressed in the whole plant at low levels.

The protein localises to the cell membrane. It catalyses the reaction L-seryl-[protein] + ATP = O-phospho-L-seryl-[protein] + ADP + H(+). The enzyme catalyses L-threonyl-[protein] + ATP = O-phospho-L-threonyl-[protein] + ADP + H(+). This Arabidopsis thaliana (Mouse-ear cress) protein is Probable LRR receptor-like serine/threonine-protein kinase RKF3 (RKF3).